Consider the following 736-residue polypeptide: ATP-dependent zinc metalloprotease FtsH (736 aa).

Disordered regions lie at residues 1 to 39 (MDSNVDSQRVPDGQIFFRPVHPGISGKDMESGTSDGQQR) and 57 to 83 (QQTQNRTGFASADTKQGSPEGADRKKM). The Cytoplasmic segment spans residues 1–87 (MDSNVDSQRV…ADRKKMPPGK (87 aa)). Over residues 57–73 (QQTQNRTGFASADTKQG) the composition is skewed to polar residues. The helical transmembrane segment at 88 to 108 (AWLWFVLILIVNFLMVRLLIP) threads the bilayer. At 109–205 (DAEQPVMVPY…KPIHEERSPW (97 aa)) the chain is on the periplasmic side. A helical transmembrane segment spans residues 206–226 (ATIVYSFGPGLLFIAFYIWLF). At 227-736 (RRMAQQGGLG…VSLPGVAGPS (510 aa)) the chain is on the cytoplasmic side. 301-308 (GAPGTGKT) provides a ligand contact to ATP. H522 is a binding site for Zn(2+). E523 is a catalytic residue. Positions 526 and 598 each coordinate Zn(2+). The disordered stretch occupies residues 706–736 (PALDAGKLPVPDGGDKNAEPSVSLPGVAGPS).

In the central section; belongs to the AAA ATPase family. This sequence in the C-terminal section; belongs to the peptidase M41 family. Homohexamer. The cofactor is Zn(2+).

Its subcellular location is the cell inner membrane. Its function is as follows. Acts as a processive, ATP-dependent zinc metallopeptidase for both cytoplasmic and membrane proteins. Plays a role in the quality control of integral membrane proteins. The sequence is that of ATP-dependent zinc metalloprotease FtsH from Syntrophus aciditrophicus (strain SB).